Consider the following 248-residue polypeptide: 14-3-3-like protein 1 (248 aa).

The protein belongs to the 14-3-3 family. As to quaternary structure, interacts with daf-16 and sir-2.1. Interacts with atgl-1. Interacts with hcf-1.

Its subcellular location is the cytoplasm. It localises to the nucleus. Required to modulate lifespan, in concert with hcf-1, acting redundantly with 14-3-3-like protein ftt-2. In Caenorhabditis elegans, this protein is 14-3-3-like protein 1 (par-5).